Consider the following 153-residue polypeptide: MFTIDFSDHTNLVKEDWFTQIDKLLTFAKEQENIEEEAELSVTFVDKDEIQEINKMYRDKDKVTDVISFALEEDEPEITGIEMPRVLGDIIICTDVAQEQADSYGHSFERELGFLALHGFLHLLGYDHMNEQDEKQMFGRQDQILNAYGLTRD.

Zn(2+) contacts are provided by His118, His122, and His128.

It belongs to the endoribonuclease YbeY family. Zn(2+) serves as cofactor.

The protein localises to the cytoplasm. In terms of biological role, single strand-specific metallo-endoribonuclease involved in late-stage 70S ribosome quality control and in maturation of the 3' terminus of the 16S rRNA. The chain is Endoribonuclease YbeY from Staphylococcus saprophyticus subsp. saprophyticus (strain ATCC 15305 / DSM 20229 / NCIMB 8711 / NCTC 7292 / S-41).